The primary structure comprises 423 residues: Dihydroorotase-like protein (423 aa).

The protein belongs to the metallo-dependent hydrolases superfamily. DHOase family. PyrC' subfamily. Heterododecamer of 6 active PyrB subunits and 6 non-catalytic PyrC' subunits.

Non-functional DHOase. This Pseudomonas aeruginosa (strain ATCC 15692 / DSM 22644 / CIP 104116 / JCM 14847 / LMG 12228 / 1C / PRS 101 / PAO1) protein is Dihydroorotase-like protein (pyrC').